The chain runs to 293 residues: uncharacterized protein (293 aa).

The helical transmembrane segment at 55 to 77 (IVLAKEIFAVAFFSLGMSCLLMA) threads the bilayer.

The protein resides in the membrane. This is an uncharacterized protein from Caenorhabditis elegans.